A 402-amino-acid polypeptide reads, in one-letter code: Tryptophan synthase beta chain (402 aa).

K91 carries the post-translational modification N6-(pyridoxal phosphate)lysine.

It belongs to the TrpB family. In terms of assembly, tetramer of two alpha and two beta chains. Pyridoxal 5'-phosphate serves as cofactor.

The enzyme catalyses (1S,2R)-1-C-(indol-3-yl)glycerol 3-phosphate + L-serine = D-glyceraldehyde 3-phosphate + L-tryptophan + H2O. Its pathway is amino-acid biosynthesis; L-tryptophan biosynthesis; L-tryptophan from chorismate: step 5/5. Its function is as follows. The beta subunit is responsible for the synthesis of L-tryptophan from indole and L-serine. This is Tryptophan synthase beta chain from Streptococcus thermophilus (strain CNRZ 1066).